Here is an 89-residue protein sequence, read N- to C-terminus: Large ribosomal subunit protein bL27 (89 aa).

Positions 1-20 (MAHKKAGGSSRNGRDSAGRR) are disordered.

The protein belongs to the bacterial ribosomal protein bL27 family.

The protein is Large ribosomal subunit protein bL27 of Jannaschia sp. (strain CCS1).